The chain runs to 1577 residues: Pentafunctional AROM polypeptide (1577 aa).

The 3-dehydroquinate synthase stretch occupies residues 1 to 384 (MSMKMADPTK…YEPKASVVSN (384 aa)). NAD(+) is bound by residues 48–50 (DTN), 85–88 (ENSK), 116–118 (GGV), and aspartate 121. Arginine 132 provides a ligand contact to 7-phospho-2-dehydro-3-deoxy-D-arabino-heptonate. 141-142 (TT) is a binding site for NAD(+). 7-phospho-2-dehydro-3-deoxy-D-arabino-heptonate contacts are provided by aspartate 148 and lysine 154. Position 163 (lysine 163) interacts with NAD(+). Asparagine 164 contacts 7-phospho-2-dehydro-3-deoxy-D-arabino-heptonate. NAD(+) contacts are provided by residues 181–184 (FIDT) and asparagine 192. A Zn(2+)-binding site is contributed by glutamate 196. Residues 196–199 (EVIK) and lysine 250 each bind 7-phospho-2-dehydro-3-deoxy-D-arabino-heptonate. Catalysis depends on glutamate 260, which acts as the Proton acceptor; for 3-dehydroquinate synthase activity. 7-phospho-2-dehydro-3-deoxy-D-arabino-heptonate is bound by residues 264-268 (RNLLN) and histidine 271. Histidine 271 lines the Zn(2+) pocket. Histidine 275 (proton acceptor; for 3-dehydroquinate synthase activity) is an active-site residue. 7-phospho-2-dehydro-3-deoxy-D-arabino-heptonate-binding residues include histidine 287 and lysine 356. Residue histidine 287 participates in Zn(2+) binding. Residues 397–842 (VIPGVPKSLN…WDALKQKFGV (446 aa)) are EPSP synthase. Cysteine 824 acts as the For EPSP synthase activity in catalysis. The segment at 864-1056 (NASVIIIGMR…RKKRLSFFVS (193 aa)) is shikimate kinase. 871 to 878 (GMRGAGKT) serves as a coordination point for ATP. The segment at 1057–1277 (LTLPDLRDTG…AAPGQLSAAE (221 aa)) is 3-dehydroquinase. Histidine 1180 serves as the catalytic Proton acceptor; for 3-dehydroquinate dehydratase activity. Lysine 1208 serves as the catalytic Schiff-base intermediate with substrate; for 3-dehydroquinate dehydratase activity. Positions 1290–1577 (AKKFAIFGKP…RNAVLGTNEK (288 aa)) are shikimate dehydrogenase.

The protein in the N-terminal section; belongs to the sugar phosphate cyclases superfamily. Dehydroquinate synthase family. In the 2nd section; belongs to the EPSP synthase family. This sequence in the 3rd section; belongs to the shikimate kinase family. It in the 4th section; belongs to the type-I 3-dehydroquinase family. The protein in the C-terminal section; belongs to the shikimate dehydrogenase family. As to quaternary structure, homodimer. Zn(2+) serves as cofactor.

It localises to the cytoplasm. It catalyses the reaction 7-phospho-2-dehydro-3-deoxy-D-arabino-heptonate = 3-dehydroquinate + phosphate. It carries out the reaction 3-dehydroquinate = 3-dehydroshikimate + H2O. The enzyme catalyses shikimate + NADP(+) = 3-dehydroshikimate + NADPH + H(+). The catalysed reaction is shikimate + ATP = 3-phosphoshikimate + ADP + H(+). It catalyses the reaction 3-phosphoshikimate + phosphoenolpyruvate = 5-O-(1-carboxyvinyl)-3-phosphoshikimate + phosphate. It participates in metabolic intermediate biosynthesis; chorismate biosynthesis; chorismate from D-erythrose 4-phosphate and phosphoenolpyruvate: step 2/7. The protein operates within metabolic intermediate biosynthesis; chorismate biosynthesis; chorismate from D-erythrose 4-phosphate and phosphoenolpyruvate: step 3/7. Its pathway is metabolic intermediate biosynthesis; chorismate biosynthesis; chorismate from D-erythrose 4-phosphate and phosphoenolpyruvate: step 4/7. It functions in the pathway metabolic intermediate biosynthesis; chorismate biosynthesis; chorismate from D-erythrose 4-phosphate and phosphoenolpyruvate: step 5/7. It participates in metabolic intermediate biosynthesis; chorismate biosynthesis; chorismate from D-erythrose 4-phosphate and phosphoenolpyruvate: step 6/7. In terms of biological role, the AROM polypeptide catalyzes 5 consecutive enzymatic reactions in prechorismate polyaromatic amino acid biosynthesis. The sequence is that of Pentafunctional AROM polypeptide from Talaromyces stipitatus (strain ATCC 10500 / CBS 375.48 / QM 6759 / NRRL 1006) (Penicillium stipitatum).